Reading from the N-terminus, the 146-residue chain is Hut operon positive regulatory protein (146 aa).

Belongs to the HutP family. Homohexamer.

Its function is as follows. Antiterminator that binds to cis-acting regulatory sequences on the mRNA in the presence of histidine, thereby suppressing transcription termination and activating the hut operon for histidine utilization. The protein is Hut operon positive regulatory protein of Bacillus mycoides (strain KBAB4) (Bacillus weihenstephanensis).